The sequence spans 95 residues: Small ribosomal subunit protein bS20c (95 aa).

The protein belongs to the bacterial ribosomal protein bS20 family.

Its subcellular location is the plastid. It is found in the chloroplast. Binds directly to 16S ribosomal RNA. The protein is Small ribosomal subunit protein bS20c of Pyropia yezoensis (Susabi-nori).